Consider the following 201-residue polypeptide: Small ribosomal subunit protein uS4 (201 aa).

The interval Met-1–Lys-42 is disordered. The 67-residue stretch at Ser-91–Ala-157 folds into the S4 RNA-binding domain.

It belongs to the universal ribosomal protein uS4 family. In terms of assembly, part of the 30S ribosomal subunit. Contacts protein S5. The interaction surface between S4 and S5 is involved in control of translational fidelity.

One of the primary rRNA binding proteins, it binds directly to 16S rRNA where it nucleates assembly of the body of the 30S subunit. Functionally, with S5 and S12 plays an important role in translational accuracy. The polypeptide is Small ribosomal subunit protein uS4 (Mycobacterium ulcerans (strain Agy99)).